The primary structure comprises 101 residues: Ribonuclease kappa-B (101 aa).

A run of 2 helical transmembrane segments spans residues 13–33 (ACGI…GIFF) and 68–88 (VGIN…VSLC).

It belongs to the RNase K family.

Its subcellular location is the membrane. In terms of biological role, endoribonuclease which preferentially cleaves ApU and ApG phosphodiester bonds. The sequence is that of Ribonuclease kappa-B (rnasekb) from Danio rerio (Zebrafish).